We begin with the raw amino-acid sequence, 383 residues long: MAFLSLPSDVVEEFLFKTPIESLVLCKPTCKQLYALCNDKRFIYNHLDLSEERLMRIYLDKIKIINPVTLDILCLPVPAEFDSVTFNVIHCDGLLLCRWTTRGLDRYNKLAVWNPISGQLKFVESFFHGVTDLYGFGYANNGPRDSYKILRVSYWRKECEIYDLKSKLWRAFSATLDWVVNTPQQNVFMNGNMYWIADTLGDNIRETFIQSFDFSKETFKPICSFPYENKIIDTLIMNGIHRIADSVILSSFRVDRLSLFRQQRLEDKKYEMEVWVTNKVTDEVVSWTKYFNVTHHPDLPILNPYLFTYMRVPTFFIHETNSIMLWCDKAAGKGFACTSFYEIGDQGEVKHQLETRKRFRANGERNSCVSSCVYVPSLVPIPE.

An F-box domain is found at 1-47 (MAFLSLPSDVVEEFLFKTPIESLVLCKPTCKQLYALCNDKRFIYNHL).

The protein is Putative F-box protein At1g77650 of Arabidopsis thaliana (Mouse-ear cress).